The sequence spans 460 residues: V-type ATP synthase beta chain (460 aa).

It belongs to the ATPase alpha/beta chains family.

In terms of biological role, produces ATP from ADP in the presence of a proton gradient across the membrane. The V-type beta chain is a regulatory subunit. In Anaeromyxobacter sp. (strain Fw109-5), this protein is V-type ATP synthase beta chain.